The chain runs to 85 residues: Antitoxin VapB31 (85 aa).

Antitoxin component of a type II toxin-antitoxin (TA) system. Upon expression in M.smegmatis neutralizes the effect of cognate toxin VapC31. This is Antitoxin VapB31 (vapB31) from Mycobacterium tuberculosis (strain ATCC 25618 / H37Rv).